We begin with the raw amino-acid sequence, 573 residues long: Patellin-1 (573 aa).

2 disordered regions span residues 1-74 and 111-202; these read MAQE…SVKE and REFT…DGTK. Residue Ala-2 is modified to N-acetylalanine. Positions 18 to 28 are enriched in basic and acidic residues; it reads VKEKPITDKEV. Thr-29 carries the phosphothreonine modification. Residues 35-74 are compositionally biased toward basic and acidic residues; it reads AEKEEVAAPVSDEKAVPEKEVTPEKEAPAAEAEKSVSVKE. Positions 89–157 form a coiled coil; sequence AEEVQKKALE…TTEVKVEEEK (69 aa). Thr-118 is subject to Phosphothreonine. Basic and acidic residues-rich tracts occupy residues 120 to 169 and 176 to 190; these read VKEE…EKSS and TKSE…EVTT. Ser-195 carries the post-translational modification Phosphoserine. Lys-285 is covalently cross-linked (Glycyl lysine isopeptide (Lys-Gly) (interchain with G-Cter in ubiquitin)). One can recognise a CRAL-TRIO domain in the interval 295-468; sequence SGEEVSEFEK…KYGGLSKDTP (174 aa). The 102-residue stretch at 471–572 folds into the GOLD domain; that stretch reads EETITEAIVK…KKKVLYRFKT (102 aa).

It belongs to the patellin family. In terms of assembly, interacts with the deubiquitinating enzyme AMSH3. In terms of tissue distribution, expressed ubiquitously with higher levels in expanding roots and leaves (at protein level).

Its subcellular location is the membrane. It localises to the cytoplasm. Its function is as follows. Carrier protein that may be involved in membrane-trafficking events associated with cell plate formation during cytokinesis. Binds to some hydrophobic molecules and promotes their transfer between the different cellular sites. Binds to phosphoinositides with a preference for PtdIns(5)P, PtdIns(4,5)P2 and PtdIns(3)P. The sequence is that of Patellin-1 (PATL1) from Arabidopsis thaliana (Mouse-ear cress).